Reading from the N-terminus, the 1905-residue chain is Tudor domain-containing 6-like (1905 aa).

Tudor domains lie at 1–30 (MVEVYFIDHGNTEMVDWYNVKKLPAELREM), 215–279 (YERG…LFDL), and 435–491 (SVTP…AYEL). A disordered region spans residues 564–795 (SRAEGSFGNS…SKLTPPLSKL (232 aa)). The segment covering 573 to 591 (SEKRNQLNDLDRGGRKETT) has biased composition (basic and acidic residues). Polar residues predominate over residues 592-602 (SKFQPYSQGSK). Basic and acidic residues predominate over residues 622–631 (FQTKEREQFE). Polar residues-rich tracts occupy residues 651-660 (VQKNMSQSGF) and 687-704 (LYSQGRETPSMSQNSSYS). Over residues 715-726 (RSKERQVSEHKQ) the composition is skewed to basic and acidic residues. Polar residues-rich tracts occupy residues 746-766 (KASQNGSSSQTEAFWSSGSDQ) and 774-787 (NASQQRRSTFQESK). 2 consecutive Tudor domains span residues 853-910 (YVNL…LLSI) and 1060-1118 (EIEV…IAAI). Disordered stretches follow at residues 1213 to 1245 (IEDNVIPSQADEDDHSEPSEEPCASESIETPAV), 1449 to 1599 (EDFE…TETE), 1655 to 1682 (VEDLDTENQESQICISGSDNRSKESGPV), and 1827 to 1905 (ESPA…APSV). Composition is skewed to acidic residues over residues 1491–1500 (EAEGLEDQDQ) and 1522–1535 (EQAEDLVPEEDPGT). Residues 1553 to 1588 (SQEHKDFPEQEEDRVAEHKNDISEPDLQSKEQKEDL) show a composition bias toward basic and acidic residues. Polar residues predominate over residues 1663-1673 (QESQICISGSD). Acidic residues predominate over residues 1876-1887 (FEPETDDMEQME).

In terms of assembly, interacts with FRGY2 (a component of messenger ribonucleoprotein (mRNP) particle) during germ cell development. Expressed in testis.

The protein localises to the cytoplasm. In terms of biological role, tudor domain-containing protein involved in germ cell development, more specifically the formation of chromatoid body (during spermiogenesis), Balbiani body (during oogenesis), germ plasm (upon fertilization), and for proper miRNA expression and spliceosome maturation. Component of cytoplasmic mRNP particle through interaction with FRGY2, and binds to maternal mRNA related to cell cycle (RCC1, RHAMM, INCENP-A, MAD2L1, HELLS) and a germ plasm specific mRNA (Dead end/Dnd1), it is proposed a role in translational activation of the maternal mRNAs repressed in mRNP particle. This chain is Tudor domain-containing 6-like, found in Xenopus laevis (African clawed frog).